A 122-amino-acid polypeptide reads, in one-letter code: Large ribosomal subunit protein uL14 (122 aa).

It belongs to the universal ribosomal protein uL14 family. In terms of assembly, part of the 50S ribosomal subunit. Forms a cluster with proteins L3 and L19. In the 70S ribosome, L14 and L19 interact and together make contacts with the 16S rRNA in bridges B5 and B8.

In terms of biological role, binds to 23S rRNA. Forms part of two intersubunit bridges in the 70S ribosome. The chain is Large ribosomal subunit protein uL14 from Elusimicrobium minutum (strain Pei191).